The sequence spans 616 residues: Matrix metalloproteinase-21 (616 aa).

The N-terminal stretch at 1 to 22 is a signal peptide; the sequence is MPTAPALGALLLLLGALTPGHQ. A propeptide spanning residues 23 to 192 is cleaved from the precursor; that stretch reads EKLFHSRDHS…TSTSKIRKKR (170 aa). The Cysteine switch signature appears at 139–146; sequence PRCGVPDN. Cys-141 contributes to the Zn(2+) binding site. The segment at 157–186 is disordered; that stretch reads SNSNNVTEKASGKSLNTTTNQNPENGTSTS. Residues Asn-161, Asn-172, and Asn-181 are each glycosylated (N-linked (GlcNAc...) asparagine). His-329 provides a ligand contact to Zn(2+). The active site involves Glu-330. Positions 333 and 339 each coordinate Zn(2+). Cysteines 375 and 606 form a disulfide. Hemopexin repeat units follow at residues 376-435, 437-493, 494-542, and 549-605; these read EGSF…WHGI, AEGI…FPKI, PSPI…FPAV, and FGNI…WTDI. Asn-418 carries an N-linked (GlcNAc...) asparagine glycan. N-linked (GlcNAc...) asparagine glycosylation is present at Asn-597.

The protein belongs to the peptidase M10A family. Zn(2+) is required as a cofactor. It depends on Ca(2+) as a cofactor. Post-translationally, the precursor is cleaved by a furin endopeptidase.

It localises to the secreted. Functionally, may play a role in gastrulation-related cell movement. Plays a specialized role in the generation of left-right asymmetry during embryogenesis. May act as a negative regulator of the NOTCH-signaling pathway. This chain is Matrix metalloproteinase-21 (MMP21), found in Cynops pyrrhogaster (Japanese fire-bellied newt).